The primary structure comprises 161 residues: Nucleotide-binding protein PBPRA2024 (161 aa).

The protein belongs to the YajQ family.

Nucleotide-binding protein. The chain is Nucleotide-binding protein PBPRA2024 from Photobacterium profundum (strain SS9).